Here is a 431-residue protein sequence, read N- to C-terminus: Glutamyl-tRNA reductase (431 aa).

Substrate is bound by residues 49–52 (TCNR), Ser109, 114–116 (EGQ), and Gln120. Cys50 serves as the catalytic Nucleophile. Position 189–194 (189–194 (GAGKMA)) interacts with NADP(+).

The protein belongs to the glutamyl-tRNA reductase family. In terms of assembly, homodimer.

It catalyses the reaction (S)-4-amino-5-oxopentanoate + tRNA(Glu) + NADP(+) = L-glutamyl-tRNA(Glu) + NADPH + H(+). It participates in porphyrin-containing compound metabolism; protoporphyrin-IX biosynthesis; 5-aminolevulinate from L-glutamyl-tRNA(Glu): step 1/2. Its pathway is porphyrin-containing compound metabolism; chlorophyll biosynthesis. Catalyzes the NADPH-dependent reduction of glutamyl-tRNA(Glu) to glutamate 1-semialdehyde (GSA). The protein is Glutamyl-tRNA reductase of Synechococcus sp. (strain JA-3-3Ab) (Cyanobacteria bacterium Yellowstone A-Prime).